The chain runs to 768 residues: Polyadenylate-binding protein, cytoplasmic and nuclear (768 aa).

Positions 1–11 (MSAETATNPPV) are enriched in polar residues. Positions 1–52 (MSAETATNPPVDTTPGAAPESATNGSNANVAADTTAGEASQTTSSTTPTAQP) are disordered. The segment covering 39 to 52 (ASQTTSSTTPTAQP) has biased composition (low complexity). 4 consecutive RRM domains span residues 55-133 (ASLY…WSQR), 143-220 (GNVF…HHIA), 236-314 (TNVY…RAQK), and 340-470 (VNLY…LAQR). 3 disordered regions span residues 374 to 428 (DFAP…EKKP), 633 to 662 (QQGM…NASP), and 739 to 768 (KNKG…ETKS). Over residues 637 to 646 (GRPGQAGRGQ) the composition is skewed to gly residues. Residues 662–739 (PNGLTLQVLN…ALTVYDEYVK (78 aa)) form the PABC domain. The span at 753–768 (NKSKDASQETAEETKS) shows a compositional bias: basic and acidic residues.

This sequence belongs to the polyadenylate-binding protein type-1 family.

Its subcellular location is the cytoplasm. The protein resides in the nucleus. Its function is as follows. Binds the poly(A) tail of mRNA. Appears to be an important mediator of the multiple roles of the poly(A) tail in mRNA biogenesis, stability and translation. In the nucleus, involved in both mRNA cleavage and polyadenylation. Is also required for efficient mRNA export to the cytoplasm. Acts in concert with a poly(A)-specific nuclease (PAN) to affect poly(A) tail shortening, which may occur concomitantly with either nucleocytoplasmic mRNA transport or translational initiation. In the cytoplasm, stimulates translation initiation and regulates mRNA decay through translation termination-coupled poly(A) shortening, probably mediated by PAN. In Coccidioides immitis (strain RS) (Valley fever fungus), this protein is Polyadenylate-binding protein, cytoplasmic and nuclear (PAB1).